We begin with the raw amino-acid sequence, 225 residues long: Biosynthetic peptidoglycan transglycosylase (225 aa).

The helical transmembrane segment at 8 to 28 threads the bilayer; sequence VLLIFIGAILLIQLWIFSSLV.

It belongs to the glycosyltransferase 51 family.

The protein localises to the cell inner membrane. The catalysed reaction is [GlcNAc-(1-&gt;4)-Mur2Ac(oyl-L-Ala-gamma-D-Glu-L-Lys-D-Ala-D-Ala)](n)-di-trans,octa-cis-undecaprenyl diphosphate + beta-D-GlcNAc-(1-&gt;4)-Mur2Ac(oyl-L-Ala-gamma-D-Glu-L-Lys-D-Ala-D-Ala)-di-trans,octa-cis-undecaprenyl diphosphate = [GlcNAc-(1-&gt;4)-Mur2Ac(oyl-L-Ala-gamma-D-Glu-L-Lys-D-Ala-D-Ala)](n+1)-di-trans,octa-cis-undecaprenyl diphosphate + di-trans,octa-cis-undecaprenyl diphosphate + H(+). It participates in cell wall biogenesis; peptidoglycan biosynthesis. Peptidoglycan polymerase that catalyzes glycan chain elongation from lipid-linked precursors. This Acinetobacter baumannii (strain AB307-0294) protein is Biosynthetic peptidoglycan transglycosylase.